The chain runs to 387 residues: WD repeat-containing protein 89 (387 aa).

WD repeat units follow at residues 21–65 (KEPT…VLRE), 68–107 (GYPG…EKPV), 112–156 (GYPS…QNLS), 168–208 (THSD…EEDA), 214–254 (NSIS…TDEP), and 319–358 (GHAA…KTFT).

This Homo sapiens (Human) protein is WD repeat-containing protein 89 (WDR89).